A 236-amino-acid polypeptide reads, in one-letter code: Small ribosomal subunit protein uS3 (236 aa).

Residues 39–107 (IREFLTEELK…DTSLNIVEVR (69 aa)) form the KH type-2 domain. A disordered region spans residues 214 to 236 (ASERRAVEGDNQGSSSNRRRENA).

The protein belongs to the universal ribosomal protein uS3 family. As to quaternary structure, part of the 30S ribosomal subunit. Forms a tight complex with proteins S10 and S14.

In terms of biological role, binds the lower part of the 30S subunit head. Binds mRNA in the 70S ribosome, positioning it for translation. This chain is Small ribosomal subunit protein uS3, found in Brucella canis (strain ATCC 23365 / NCTC 10854 / RM-666).